The chain runs to 321 residues: Aspartate carbamoyltransferase catalytic subunit (321 aa).

Carbamoyl phosphate contacts are provided by Arg-65 and Thr-66. Lys-93 is a binding site for L-aspartate. Carbamoyl phosphate is bound by residues Arg-115, His-143, and Gln-146. Positions 176 and 230 each coordinate L-aspartate. Carbamoyl phosphate contacts are provided by Gly-271 and Pro-272.

The protein belongs to the aspartate/ornithine carbamoyltransferase superfamily. ATCase family. In terms of assembly, heterododecamer (2C3:3R2) of six catalytic PyrB chains organized as two trimers (C3), and six regulatory PyrI chains organized as three dimers (R2).

The catalysed reaction is carbamoyl phosphate + L-aspartate = N-carbamoyl-L-aspartate + phosphate + H(+). It functions in the pathway pyrimidine metabolism; UMP biosynthesis via de novo pathway; (S)-dihydroorotate from bicarbonate: step 2/3. In terms of biological role, catalyzes the condensation of carbamoyl phosphate and aspartate to form carbamoyl aspartate and inorganic phosphate, the committed step in the de novo pyrimidine nucleotide biosynthesis pathway. The sequence is that of Aspartate carbamoyltransferase catalytic subunit from Bartonella tribocorum (strain CIP 105476 / IBS 506).